Consider the following 126-residue polypeptide: Large ribosomal subunit protein bL20 (126 aa).

This sequence belongs to the bacterial ribosomal protein bL20 family.

Binds directly to 23S ribosomal RNA and is necessary for the in vitro assembly process of the 50S ribosomal subunit. It is not involved in the protein synthesizing functions of that subunit. This is Large ribosomal subunit protein bL20 from Nocardia farcinica (strain IFM 10152).